The sequence spans 227 residues: Prolactin (227 aa).

An N-terminal signal peptide occupies residues methionine 1 to serine 28. A disulfide bridge links cysteine 32 with cysteine 39. 3 positions are modified to phosphoserine: serine 54, serine 62, and serine 118. Disulfide bonds link cysteine 86/cysteine 202 and cysteine 219/cysteine 227.

Belongs to the somatotropin/prolactin family. In terms of assembly, interacts with PRLR.

The protein localises to the secreted. Its function is as follows. Prolactin acts primarily on the mammary gland by promoting lactation. This chain is Prolactin (PRL), found in Oryctolagus cuniculus (Rabbit).